We begin with the raw amino-acid sequence, 124 residues long: Non-structural protein 2 (124 aa).

The DLNP; interaction with MAP1B signature appears at 121-124 (DLNP).

Belongs to the pneumovirus non-structural protein 2 family. Monomer (instable). Homomultimer. Heteromultimer with NS1. Interacts with host RIGI (via N-terminus); this interaction prevents host signaling pathway involved in interferon production. Interacts with host MAP1B/microtubule-associated protein 1B.

The protein resides in the host mitochondrion. Its function is as follows. Plays a major role in antagonizing the type I IFN-mediated antiviral response. Acts cooperatively with NS1 to repress activation and nuclear translocation of host IFN-regulatory factor IRF3. Interacts with the host cytoplasmic sensor of viral nucleic acids RIGI and prevents the interaction with its downstream partner MAVS. Together with NS2, participates in the proteasomal degradation of host STAT2, IRF3, IRF7, TBK1 and RIGI through a NS-degradasome involving CUL2 and Elongin-C. The degradasome requires an intact mitochondrial MAVS. Induces host SOCS1 expression. Induces activation of NF-kappa-B. Suppresses premature apoptosis by an NF-kappa-B-dependent, interferon-independent mechanism promoting continued viral replication. The chain is Non-structural protein 2 (1B) from Human respiratory syncytial virus A (strain A2).